The chain runs to 133 residues: Small ribosomal subunit protein uS8 (133 aa).

This sequence belongs to the universal ribosomal protein uS8 family. In terms of assembly, part of the 30S ribosomal subunit. Contacts proteins S5 and S12.

One of the primary rRNA binding proteins, it binds directly to 16S rRNA central domain where it helps coordinate assembly of the platform of the 30S subunit. This is Small ribosomal subunit protein uS8 from Lachnoclostridium phytofermentans (strain ATCC 700394 / DSM 18823 / ISDg) (Clostridium phytofermentans).